The sequence spans 174 residues: Caltractin ICL1e (174 aa).

Residues 1-33 (MSKKQQAPVAQKPVGKQQQVNRKPQDRPGLTED) form a disordered region. 4 EF-hand domains span residues 33–68 (DEIEEIKEAFNLFDTEGTGRVDPRELKAAMQSLGFD), 88–103 (IDFDQFLDAITSKLGN), 105–140 (ESRDGINKIFDLFDDDGSNSINLNNLKRVSKELGET), and 141–174 (MTAEELAEMLERAASNGRDISREDFYNIMVKRTF).

The protein belongs to the centrin family. As to quaternary structure, monomer.

It is found in the cytoplasm. The protein localises to the cytoskeleton. Its function is as follows. Plays a fundamental role in microtubule organizing center structure and function. Component of the infraciliary lattice (ICL) and the ciliary basal bodies. In Paramecium tetraurelia, this protein is Caltractin ICL1e (Icl1e).